We begin with the raw amino-acid sequence, 86 residues long: Cerebrin prohormone (86 aa).

An N-terminal signal peptide occupies residues 1–27; sequence MFGYRSLLVLLVTLSLCLLLQSSHCSA. Residues 28-64 constitute a propeptide that is removed on maturation; it reads VRTYGNDLDARARREIISLAARLIKLSMYGPEDDSFV. Residue I83 is modified to Isoleucine amide.

Expressed only in cerebral ganglion.

It is found in the secreted. May function as a hormone and may play a neuromodulatory role. The protein is Cerebrin prohormone (CBPH) of Aplysia californica (California sea hare).